We begin with the raw amino-acid sequence, 65 residues long: UPF0434 protein BQ10150 (65 aa).

The protein belongs to the UPF0434 family.

This Bartonella quintana (strain Toulouse) (Rochalimaea quintana) protein is UPF0434 protein BQ10150.